The following is a 117-amino-acid chain: Large ribosomal subunit protein bL19 (117 aa).

This sequence belongs to the bacterial ribosomal protein bL19 family.

Functionally, this protein is located at the 30S-50S ribosomal subunit interface and may play a role in the structure and function of the aminoacyl-tRNA binding site. In Rhodopirellula baltica (strain DSM 10527 / NCIMB 13988 / SH1), this protein is Large ribosomal subunit protein bL19.